The chain runs to 298 residues: Bifunctional protein FolD (298 aa).

NADP(+) is bound by residues 165–167 (GRS), serine 190, and isoleucine 231.

Belongs to the tetrahydrofolate dehydrogenase/cyclohydrolase family. In terms of assembly, homodimer.

It carries out the reaction (6R)-5,10-methylene-5,6,7,8-tetrahydrofolate + NADP(+) = (6R)-5,10-methenyltetrahydrofolate + NADPH. The catalysed reaction is (6R)-5,10-methenyltetrahydrofolate + H2O = (6R)-10-formyltetrahydrofolate + H(+). Its pathway is one-carbon metabolism; tetrahydrofolate interconversion. Its function is as follows. Catalyzes the oxidation of 5,10-methylenetetrahydrofolate to 5,10-methenyltetrahydrofolate and then the hydrolysis of 5,10-methenyltetrahydrofolate to 10-formyltetrahydrofolate. In Prochlorococcus marinus subsp. pastoris (strain CCMP1986 / NIES-2087 / MED4), this protein is Bifunctional protein FolD.